Here is a 367-residue protein sequence, read N- to C-terminus: Splicing factor U2AF-associated protein 2 (367 aa).

Residues 36 to 104 (YDPNSLKMNK…SKSENSEASP (69 aa)) form a disordered region. Positions 61 to 78 (TEGKESSNGEDRHTKRLY) are enriched in basic and acidic residues. RRM domains lie at 112–193 (VYIQ…KMRV) and 268–329 (LLID…VVEA).

The protein belongs to the HTATSF1 family. Interacts with the U2AF large and U2AF small subunits.

In terms of biological role, has a role in pre-mRNA splicing. The polypeptide is Splicing factor U2AF-associated protein 2 (uap2) (Schizosaccharomyces pombe (strain 972 / ATCC 24843) (Fission yeast)).